The chain runs to 298 residues: Multifunctional dioxygenase ausE (298 aa).

Residues Arg72 and Gln127 each coordinate substrate. Fe cation-binding residues include His130 and Asp132. Thr167 contributes to the substrate binding site. Residue His214 participates in Fe cation binding. Arg226 contributes to the substrate binding site.

This sequence belongs to the PhyH family. In terms of assembly, homodimer. Fe cation serves as cofactor.

The enzyme catalyses preaustinoid A1 + 2-oxoglutarate + O2 = preaustinoid A2 + succinate + CO2 + H2O. It carries out the reaction preaustinoid A2 + 2-oxoglutarate + O2 = preaustinoid A3 + succinate + CO2 + H2O. It catalyses the reaction berkeleyone A + 2-oxoglutarate + O2 = preaustinoid A + succinate + CO2 + H2O. The protein operates within secondary metabolite biosynthesis; terpenoid biosynthesis. Multifunctional dioxygenase; part of the gene cluster that mediates the biosynthesis of calidodehydroaustin, a fungal meroterpenoid. The first step of the pathway is the synthesis of 3,5-dimethylorsellinic acid by the polyketide synthase ausA. 3,5-dimethylorsellinic acid is then prenylated by the polyprenyl transferase ausN. Further epoxidation by the FAD-dependent monooxygenase ausM and cyclization by the probable terpene cyclase ausL lead to the formation of protoaustinoid A. Protoaustinoid A is then oxidized to spiro-lactone preaustinoid A3 by the combined action of the FAD-binding monooxygenases ausB and ausC, and the dioxygenase ausE. Acid-catalyzed keto-rearrangement and ring contraction of the tetraketide portion of preaustinoid A3 by ausJ lead to the formation of preaustinoid A4. The aldo-keto reductase ausK, with the help of ausH, is involved in the next step by transforming preaustinoid A4 into isoaustinone which is in turn hydroxylated by the P450 monooxygenase ausI to form austinolide. The cytochrome P450 monooxygenase ausG modifies austinolide to austinol. Austinol is further acetylated to austin by the O-acetyltransferase ausP, which spontaneously changes to dehydroaustin. The cytochrome P450 monooxygenase ausR then converts dehydroaustin is into 7-dehydrodehydroaustin. The hydroxylation catalyzed by ausR permits the O-acetyltransferase ausQ to add an additional acetyl group to the molecule, leading to the formation of acetoxydehydroaustin. The short chain dehydrogenase ausT catalyzes the reduction of the double bond present between carbon atoms 1 and 2 to convert 7-dehydrodehydroaustin into 1,2-dihydro-7-hydroxydehydroaustin. AusQ catalyzes not only an acetylation reaction but also the addition of the PKS ausV diketide product to 1,2-dihydro-7-hydroxydehydroaustin, forming precalidodehydroaustin. Finally, the iron/alpha-ketoglutarate-dependent dioxygenase converts precalidodehydroaustin into calidodehydroaustin. This chain is Multifunctional dioxygenase ausE, found in Aspergillus calidoustus.